The chain runs to 136 residues: Small ribosomal subunit protein uS9 (136 aa).

Belongs to the universal ribosomal protein uS9 family.

The sequence is that of Small ribosomal subunit protein uS9 from Borrelia recurrentis (strain A1).